The primary structure comprises 103 residues: Large ribosomal subunit protein bL21 (103 aa).

Belongs to the bacterial ribosomal protein bL21 family. In terms of assembly, part of the 50S ribosomal subunit. Contacts protein L20.

Functionally, this protein binds to 23S rRNA in the presence of protein L20. The chain is Large ribosomal subunit protein bL21 from Clostridium perfringens (strain ATCC 13124 / DSM 756 / JCM 1290 / NCIMB 6125 / NCTC 8237 / Type A).